Here is a 313-residue protein sequence, read N- to C-terminus: Biotin synthase (313 aa).

The region spanning 28 to 258 (NFGNDIELCS…LFPQARLRLS (231 aa)) is the Radical SAM core domain. [4Fe-4S] cluster contacts are provided by Cys-46, Cys-50, and Cys-53. 4 residues coordinate [2Fe-2S] cluster: Cys-90, Cys-121, Cys-181, and Arg-256.

It belongs to the radical SAM superfamily. Biotin synthase family. Homodimer. [4Fe-4S] cluster serves as cofactor. It depends on [2Fe-2S] cluster as a cofactor.

It carries out the reaction (4R,5S)-dethiobiotin + (sulfur carrier)-SH + 2 reduced [2Fe-2S]-[ferredoxin] + 2 S-adenosyl-L-methionine = (sulfur carrier)-H + biotin + 2 5'-deoxyadenosine + 2 L-methionine + 2 oxidized [2Fe-2S]-[ferredoxin]. The protein operates within cofactor biosynthesis; biotin biosynthesis; biotin from 7,8-diaminononanoate: step 2/2. Catalyzes the conversion of dethiobiotin (DTB) to biotin by the insertion of a sulfur atom into dethiobiotin via a radical-based mechanism. The chain is Biotin synthase from Francisella tularensis subsp. tularensis (strain FSC 198).